The following is a 387-amino-acid chain: Major outer membrane protein P.IA (387 aa).

An N-terminal signal peptide occupies residues methionine 1 to alanine 19.

The protein belongs to the Gram-negative porin family. As to quaternary structure, homotrimer.

Its subcellular location is the cell outer membrane. Its function is as follows. Serves as a slightly cation selective porin. Major antigen on the gonococcal cell surface and it may have pathogenic properties in addition to its porin activity. The sequence is that of Major outer membrane protein P.IA (porA) from Neisseria meningitidis serogroup C.